Reading from the N-terminus, the 908-residue chain is Autophagy-related protein 9 (908 aa).

Residues 1–216 (MADGVIARLM…SGMWCIVVER (216 aa)) lie on the Cytoplasmic side of the membrane. The tract at residues 64–162 (SRATVDGRIP…IDQELQPPLH (99 aa)) is disordered. A helical transmembrane segment spans residues 217 to 237 (VLHLIKVAFVAFLLTFLSQCV). Topologically, residues 238–259 (DFKKIPSNQKLSQVLVPQCTRN) are lumenal. N-linked (GlcNAc...) asparagine glycosylation occurs at Asn259. A helical membrane pass occupies residues 260–280 (MSGLWNIGLWLFAFYFMWKSI). Over 281–433 (QYILDLRRLT…GILSAKLRSR (153 aa)) the chain is Cytoplasmic. The stretch at 434 to 454 (FIFAGVMILILSPFVAGYLII) is an intramembrane region. Topologically, residues 455–525 (VYFLEYYNEI…KTSMVAKTVS (71 aa)) are cytoplasmic. Residues 526-546 (FIAGSIATVLALISVFDPEMF) traverse the membrane as a helical segment. At 547 to 555 (LGFEITHDR) the chain is on the lumenal side. Residues 556-576 (TVLFYTAVFGAIWSVARGSVS) form a helical membrane-spanning segment. Residues 577 to 622 (EDNAVFDPEYALGNVVEYTHYQPEHWKDRWHSADVKAEFEELYKLK) are Cytoplasmic-facing. The stretch at 623-643 (LVIFIEEILSILTTPFVLFFS) is an intramembrane region. Topologically, residues 644-908 (LPKSADQIID…HLNRRLGGVR (265 aa)) are cytoplasmic. Disordered regions lie at residues 751 to 779 (AASR…AVMA) and 809 to 878 (QFRG…DSVV). Over residues 813–825 (GNQGDGHMMGGGS) the composition is skewed to gly residues. The segment covering 839-852 (QTHDDESEDSRAGL) has biased composition (basic and acidic residues).

This sequence belongs to the ATG9 family. As to quaternary structure, homotrimer; forms a homotrimer with a central pore that forms a path between the two membrane leaflets. In terms of processing, phosphorylated by apg-1. Apg-1 phosphorylation is required for preautophagosome elongation.

It localises to the preautophagosomal structure membrane. It is found in the cytoplasmic vesicle membrane. The protein resides in the golgi apparatus membrane. The protein localises to the endoplasmic reticulum membrane. The enzyme catalyses a 1,2-diacyl-sn-glycero-3-phosphocholine(in) = a 1,2-diacyl-sn-glycero-3-phosphocholine(out). The catalysed reaction is a 1,2-diacyl-sn-glycero-3-phospho-L-serine(in) = a 1,2-diacyl-sn-glycero-3-phospho-L-serine(out). It carries out the reaction a 1,2-diacyl-sn-glycero-3-phosphoethanolamine(in) = a 1,2-diacyl-sn-glycero-3-phosphoethanolamine(out). It catalyses the reaction a 1,2-diacyl-sn-glycero-3-phospho-(1D-myo-inositol-3-phosphate)(in) = a 1,2-diacyl-sn-glycero-3-phospho-(1D-myo-inositol-3-phosphate)(out). Its function is as follows. Phospholipid scramblase involved in autophagy and cytoplasm to vacuole transport (Cvt) vesicle formation. Cycles between the preautophagosomal structure/phagophore assembly site (PAS) and the cytoplasmic vesicle pool and supplies membrane for the growing autophagosome. Lipid scramblase activity plays a key role in preautophagosomal structure/phagophore assembly by distributing the phospholipids that arrive through atg-2 from the cytoplasmic to the luminal leaflet of the bilayer, thereby driving autophagosomal membrane expansion. Required for mitophagy. Also involved in endoplasmic reticulum-specific autophagic process and is essential for the survival of cells subjected to severe ER stress. Different machineries are required for anterograde trafficking to the PAS during either the Cvt pathway or bulk autophagy and for retrograde trafficking. The polypeptide is Autophagy-related protein 9 (apg-7) (Neurospora crassa (strain ATCC 24698 / 74-OR23-1A / CBS 708.71 / DSM 1257 / FGSC 987)).